The primary structure comprises 330 residues: Membrane-associated protein VIPP1, chloroplastic (330 aa).

A chloroplast-targeting transit peptide spans 1–64; that stretch reads MALKASPVTG…LRLACDNRLR (64 aa). 2 coiled-coil regions span residues 124–259 and 312–329; these read SQKQ…LTQI and KDSE…KAND. Residues 287–312 are disordered; the sequence is LSGSSKKGELPPGRSTVAASTRYPFK.

The protein belongs to the PspA/Vipp/IM30 family. Homomultimer. Complex formation involves interaction via the central alpha-helical domain (71-286).

Its subcellular location is the plastid. The protein localises to the chloroplast inner membrane. The protein resides in the chloroplast thylakoid membrane. Required for plastid vesicle formation and thylakoid membrane biogenesis, but not for functional assembly of thylakoid protein complexes. The protein is Membrane-associated protein VIPP1, chloroplastic of Arabidopsis thaliana (Mouse-ear cress).